A 2049-amino-acid chain; its full sequence is Kinetochore-associated protein rod-1 (2049 aa).

Component of the RZZ complex composed of rod-1, czw-1 and zwl-1. Interacts (via N-terminus) with NDC80 complex component ndc-80.

The protein localises to the chromosome. It localises to the centromere. Its subcellular location is the kinetochore. The protein resides in the cytoplasm. It is found in the cytoskeleton. The protein localises to the spindle. Essential component of the mitotic checkpoint, which prevents cells from prematurely exiting mitosis. Required for chromosome segregation, the assembly of the dynein-dynactin and mdf-1-mdf-2 complexes onto kinetochores and spindle pole separation. Plays a role in nuclear envelope breakdown. Its function related to the spindle assembly machinery and kinetochore-microtubule attachments likely depends on its association in the mitotic RZZ complex. The RZZ complex recruits the spindly-like protein spdl-1 to kinetochores. To prevent irregular chromosome segregation, the complex also inhibits the attachment of the kinetochore-associated NDC80 complex to microtubules. The recruitment of spdl-1 to kinetochores relieves this inhibition. Required for embryonic development. In Caenorhabditis elegans, this protein is Kinetochore-associated protein rod-1.